The chain runs to 214 residues: Ribonuclease HII (214 aa).

An RNase H type-2 domain is found at 26–214 (EIVCGVDEAG…PVRAALDLIR (189 aa)). A divalent metal cation contacts are provided by D32, E33, and D124.

This sequence belongs to the RNase HII family. Mn(2+) is required as a cofactor. Requires Mg(2+) as cofactor.

Its subcellular location is the cytoplasm. The catalysed reaction is Endonucleolytic cleavage to 5'-phosphomonoester.. In terms of biological role, endonuclease that specifically degrades the RNA of RNA-DNA hybrids. The sequence is that of Ribonuclease HII from Burkholderia orbicola (strain MC0-3).